A 272-amino-acid chain; its full sequence is Putative protein-disulfide oxidoreductase RP025 (272 aa).

Residues 1–21 form the signal peptide; that stretch reads MRNIFIVLIFLFLSNCSEVKA. The 190-residue stretch at 74–263 folds into the Thioredoxin domain; that stretch reads DSREQKKPEI…ISKAVDKALD (190 aa). A disulfide bond links cysteine 116 and cysteine 119.

It belongs to the thioredoxin family. DsbA subfamily.

It is found in the periplasm. In terms of biological role, may be required for disulfide bond formation in some proteins. This is Putative protein-disulfide oxidoreductase RP025 from Rickettsia prowazekii (strain Madrid E).